The following is a 415-amino-acid chain: Serine hydroxymethyltransferase (415 aa).

Residues Leu-120 and 124–126 (GHL) contribute to the (6S)-5,6,7,8-tetrahydrofolate site. Lys-229 is modified (N6-(pyridoxal phosphate)lysine).

Belongs to the SHMT family. Homodimer. It depends on pyridoxal 5'-phosphate as a cofactor.

Its subcellular location is the cytoplasm. It carries out the reaction (6R)-5,10-methylene-5,6,7,8-tetrahydrofolate + glycine + H2O = (6S)-5,6,7,8-tetrahydrofolate + L-serine. It participates in one-carbon metabolism; tetrahydrofolate interconversion. Its pathway is amino-acid biosynthesis; glycine biosynthesis; glycine from L-serine: step 1/1. Catalyzes the reversible interconversion of serine and glycine with tetrahydrofolate (THF) serving as the one-carbon carrier. This reaction serves as the major source of one-carbon groups required for the biosynthesis of purines, thymidylate, methionine, and other important biomolecules. Also exhibits THF-independent aldolase activity toward beta-hydroxyamino acids, producing glycine and aldehydes, via a retro-aldol mechanism. The polypeptide is Serine hydroxymethyltransferase (Pelotomaculum thermopropionicum (strain DSM 13744 / JCM 10971 / SI)).